The primary structure comprises 249 residues: DNA repair protein RecO (249 aa).

The protein belongs to the RecO family.

In terms of biological role, involved in DNA repair and RecF pathway recombination. This chain is DNA repair protein RecO, found in Lawsonia intracellularis (strain PHE/MN1-00).